A 279-amino-acid chain; its full sequence is Tryptophan synthase alpha chain (279 aa).

Residues glutamate 50 and aspartate 61 each act as proton acceptor in the active site.

This sequence belongs to the TrpA family. Tetramer of two alpha and two beta chains.

It catalyses the reaction (1S,2R)-1-C-(indol-3-yl)glycerol 3-phosphate + L-serine = D-glyceraldehyde 3-phosphate + L-tryptophan + H2O. Its pathway is amino-acid biosynthesis; L-tryptophan biosynthesis; L-tryptophan from chorismate: step 5/5. The alpha subunit is responsible for the aldol cleavage of indoleglycerol phosphate to indole and glyceraldehyde 3-phosphate. This Rhizobium meliloti (strain 1021) (Ensifer meliloti) protein is Tryptophan synthase alpha chain.